A 523-amino-acid polypeptide reads, in one-letter code: Leghemoglobin reductase (523 aa).

The N-terminal 30 residues, 1–30 (MAMASLARRKAYAVVSSSRSSVFLTSLRGF), are a transit peptide targeting the mitochondrion. Residues 66–75 (EKRGTLGGTC), Lys84, Gly148, and 177–179 (TGS) each bind FAD. The cysteines at positions 75 and 80 are disulfide-linked. Residues 214 to 221 (GAGYIGLE), Glu237, Val271, and Gly306 contribute to the NAD(+) site. FAD is bound by residues Asp347 and 353–356 (MLAH). His479 serves as the catalytic Proton acceptor.

This sequence belongs to the class-I pyridine nucleotide-disulfide oxidoreductase family. As to quaternary structure, homodimer. FAD is required as a cofactor.

It is found in the mitochondrion. The catalysed reaction is 2 Fe(III)-[leghemoglobin] + NADH = 2 Fe(II)-[leghemoglobin] + NAD(+) + H(+). It carries out the reaction 2 Fe(III)-[leghemoglobin] + NADPH = 2 Fe(II)-[leghemoglobin] + NADP(+) + H(+). In terms of biological role, reduces ferric leghemoglobin (Lb) to ferrous Lb. The polypeptide is Leghemoglobin reductase (FLBR) (Vigna unguiculata (Cowpea)).